The chain runs to 193 residues: Coiled-coil domain-containing protein 184 (193 aa).

The stretch at 39–68 forms a coiled coil; that stretch reads GMKELMEHLKAQLQALFEDVRAMRGALDEQ. Residues 101–176 form a disordered region; it reads GLGVAGGKGS…LGENGPLVEP (76 aa). Over residues 135 to 146 the composition is skewed to acidic residues; sequence PDEEDEEEEEEK.

The protein is Coiled-coil domain-containing protein 184 (Ccdc184) of Rattus norvegicus (Rat).